We begin with the raw amino-acid sequence, 432 residues long: Asparagine--tRNA ligase 2 (432 aa).

Belongs to the class-II aminoacyl-tRNA synthetase family. In terms of assembly, homodimer.

It is found in the cytoplasm. The catalysed reaction is tRNA(Asn) + L-asparagine + ATP = L-asparaginyl-tRNA(Asn) + AMP + diphosphate + H(+). This Lactiplantibacillus plantarum (strain ATCC BAA-793 / NCIMB 8826 / WCFS1) (Lactobacillus plantarum) protein is Asparagine--tRNA ligase 2 (asnS2).